The chain runs to 147 residues: Large ribosomal subunit protein uL13 (147 aa).

Belongs to the universal ribosomal protein uL13 family. Part of the 50S ribosomal subunit.

Its function is as follows. This protein is one of the early assembly proteins of the 50S ribosomal subunit, although it is not seen to bind rRNA by itself. It is important during the early stages of 50S assembly. This chain is Large ribosomal subunit protein uL13, found in Salinispora arenicola (strain CNS-205).